The primary structure comprises 200 residues: MLAFCRSSLKSKKYFIILLALAAIAGLGTHAAWSSNGLPRIDNKTLGRLAQQHPVVVLFRHAERCDRSTNQCLSDKTGITVKGTQDARELGNAFSADIPDFDLYSSNTVRTIQSATWFSAGKKLTVDKRLLQCGNEIYSAIKDLQSKAPDKNIVIFTHNHCLTYIAKDKRDATFKPDYLDGLVMHVEKGKVYLDGEFVNH.

The N-terminal stretch at 1 to 25 is a signal peptide; sequence MLAFCRSSLKSKKYFIILLALAAIA.

It belongs to the phosphoglycerate mutase family. Ais subfamily.

It is found in the periplasm. Its pathway is bacterial outer membrane biogenesis; lipopolysaccharide metabolism. In terms of biological role, catalyzes the dephosphorylation of heptose(II) of the outer membrane lipopolysaccharide core. In Escherichia coli O157:H7, this protein is Lipopolysaccharide core heptose(II)-phosphate phosphatase.